A 297-amino-acid chain; its full sequence is MFDYKLLSALAAVVEQAGFERAAQVLGLSQSAISQRIKLLEARVGQPVLVRGTPPSPTEIGRRLLNHVQQVRLLERDLQTLVPALDEEGLPERLRIALNADSLATWWAEAVGDFCAEQHLLLDLIVEDQTVGLKRMRAGEVAGCLCASERPVAGARSVLLGAMRYRALASPAFIKRHFPDGVRAEQLPRTPALVFGPDDFLQHRYLASLGVDGGFEHHLCPSSEGFIRLTEAGLGWGLVPELQVREQLERGVLRELLPDKPIDVPLYWHHWRNGGQLLGLLTEQLVRSSAQWLVPLD.

Residues 2 to 58 (FDYKLLSALAAVVEQAGFERAAQVLGLSQSAISQRIKLLEARVGQPVLVRGTPPSPT) form the HTH lysR-type domain. The segment at residues 19–38 (FERAAQVLGLSQSAISQRIK) is a DNA-binding region (H-T-H motif).

The protein belongs to the LysR transcriptional regulatory family. Homodimer.

Its function is as follows. Controls the transcription of genes involved in arginine and lysine metabolism. This chain is HTH-type transcriptional regulator ArgP, found in Pseudomonas fluorescens (strain Pf0-1).